The chain runs to 337 residues: Low-density lipoprotein receptor class A domain-containing protein 3 (337 aa).

The N-terminal stretch at 1 to 13 (MWLLYLILGSVES) is a signal peptide. Over 14 to 169 (QLLPGNNHTT…NQLLYYPSIT (156 aa)) the chain is Extracellular. Asn-20 carries an N-linked (GlcNAc...) asparagine glycan. LDL-receptor class A domains are found at residues 24–61 (ECNI…KECP), 66–103 (RCGP…ENCT), and 108–144 (LCSN…EHCH). Intrachain disulfides connect Cys-25-Cys-38, Cys-33-Cys-51, Cys-45-Cys-60, Cys-67-Cys-80, Cys-74-Cys-93, Cys-87-Cys-102, Cys-109-Cys-121, Cys-116-Cys-134, and Cys-128-Cys-143. Residue Asn-101 is glycosylated (N-linked (GlcNAc...) asparagine). Residues 170-190 (YTIIGSSVIFVLVVALLALVL) form a helical membrane-spanning segment. The Cytoplasmic segment spans residues 191–337 (HHQRKRNLMS…DDLPSTEVDV (147 aa)). Over residues 243–253 (QQPVSVESPPS) the composition is skewed to polar residues. Residues 243 to 337 (QQPVSVESPP…DDLPSTEVDV (95 aa)) are disordered. Residues 291–303 (RSRTGSSASAGST) are compositionally biased toward low complexity.

It belongs to the LDLR family.

It localises to the cell membrane. This Xenopus tropicalis (Western clawed frog) protein is Low-density lipoprotein receptor class A domain-containing protein 3.